A 201-amino-acid polypeptide reads, in one-letter code: FMN-dependent NADH:quinone oxidoreductase (201 aa).

FMN contacts are provided by residues 92-95 and 136-139; these read MWNL and STGG.

This sequence belongs to the azoreductase type 1 family. Homodimer. FMN serves as cofactor.

The catalysed reaction is 2 a quinone + NADH + H(+) = 2 a 1,4-benzosemiquinone + NAD(+). It catalyses the reaction N,N-dimethyl-1,4-phenylenediamine + anthranilate + 2 NAD(+) = 2-(4-dimethylaminophenyl)diazenylbenzoate + 2 NADH + 2 H(+). Quinone reductase that provides resistance to thiol-specific stress caused by electrophilic quinones. Its function is as follows. Also exhibits azoreductase activity. Catalyzes the reductive cleavage of the azo bond in aromatic azo compounds to the corresponding amines. The sequence is that of FMN-dependent NADH:quinone oxidoreductase from Coprothermobacter proteolyticus (strain ATCC 35245 / DSM 5265 / OCM 4 / BT).